The sequence spans 694 residues: Threonine--tRNA ligase (694 aa).

Residues 8-74 enclose the TGS domain; that stretch reads NFVNTSVTTH…EETATFTAVP (67 aa). Residues 273–579 form a catalytic region; that stretch reads DHRRLGTELD…LLEHYAGAFP (307 aa). Zn(2+) contacts are provided by cysteine 378, histidine 429, and histidine 556.

Belongs to the class-II aminoacyl-tRNA synthetase family. Homodimer. Zn(2+) serves as cofactor.

It localises to the cytoplasm. The catalysed reaction is tRNA(Thr) + L-threonine + ATP = L-threonyl-tRNA(Thr) + AMP + diphosphate + H(+). Its function is as follows. Catalyzes the attachment of threonine to tRNA(Thr) in a two-step reaction: L-threonine is first activated by ATP to form Thr-AMP and then transferred to the acceptor end of tRNA(Thr). Also edits incorrectly charged L-seryl-tRNA(Thr). The protein is Threonine--tRNA ligase of Corynebacterium efficiens (strain DSM 44549 / YS-314 / AJ 12310 / JCM 11189 / NBRC 100395).